A 539-amino-acid polypeptide reads, in one-letter code: GMP synthase [glutamine-hydrolyzing] (539 aa).

In terms of domain architecture, Glutamine amidotransferase type-1 spans 4–203 (KILILDFGSQ…VHDICGCKSD (200 aa)). The active-site Nucleophile is the Cys-82. Catalysis depends on residues His-177 and Glu-179. A GMPS ATP-PPase domain is found at 204-395 (WNMPDYIAEA…LGLPHDMVYR (192 aa)). 231–237 (SGGVDSS) contributes to the ATP binding site.

As to quaternary structure, homodimer.

It catalyses the reaction XMP + L-glutamine + ATP + H2O = GMP + L-glutamate + AMP + diphosphate + 2 H(+). It functions in the pathway purine metabolism; GMP biosynthesis; GMP from XMP (L-Gln route): step 1/1. Its function is as follows. Catalyzes the synthesis of GMP from XMP. The protein is GMP synthase [glutamine-hydrolyzing] of Herminiimonas arsenicoxydans.